The following is a 353-amino-acid chain: Phospho-N-acetylmuramoyl-pentapeptide-transferase (353 aa).

Transmembrane regions (helical) follow at residues 22–42 (FAFF…ITWA), 65–85 (TPTM…LSCI), 88–108 (DNIF…IGLI), 129–149 (LLTQ…SSEL), 161–181 (PLFD…ISSS), 192–212 (GLAT…LYLS), 228–248 (GLGE…GFLW), 256–276 (VFMG…LAII), 281–301 (ILLL…ILQV), and 330–350 (KIIV…LASI).

This sequence belongs to the glycosyltransferase 4 family. MraY subfamily. Requires Mg(2+) as cofactor.

It localises to the cell inner membrane. The enzyme catalyses UDP-N-acetyl-alpha-D-muramoyl-L-alanyl-gamma-D-glutamyl-meso-2,6-diaminopimeloyl-D-alanyl-D-alanine + di-trans,octa-cis-undecaprenyl phosphate = di-trans,octa-cis-undecaprenyl diphospho-N-acetyl-alpha-D-muramoyl-L-alanyl-D-glutamyl-meso-2,6-diaminopimeloyl-D-alanyl-D-alanine + UMP. It participates in cell wall biogenesis; peptidoglycan biosynthesis. Its function is as follows. Catalyzes the initial step of the lipid cycle reactions in the biosynthesis of the cell wall peptidoglycan: transfers peptidoglycan precursor phospho-MurNAc-pentapeptide from UDP-MurNAc-pentapeptide onto the lipid carrier undecaprenyl phosphate, yielding undecaprenyl-pyrophosphoryl-MurNAc-pentapeptide, known as lipid I. The polypeptide is Phospho-N-acetylmuramoyl-pentapeptide-transferase (Campylobacter jejuni subsp. jejuni serotype O:23/36 (strain 81-176)).